The following is a 282-amino-acid chain: Short-chain dehydrogenase/reductase prx7 (282 aa).

Positions 23, 70, 150, 154, 183, and 185 each coordinate NADP(+). The Proton acceptor role is filled by Y150. Residue K154 is the Lowers pKa of active site Tyr of the active site.

This sequence belongs to the short-chain dehydrogenases/reductases (SDR) family.

It functions in the pathway sesquiterpene biosynthesis. Its function is as follows. Short-chain dehydrogenase/reductase; part of the gene cluster that mediates the biosynthesis of PR-toxin, a bicyclic sesquiterpene belonging to the eremophilane class and acting as a mycotoxin. The first step of the pathway is catalyzed by the aristolochene synthase which performs the cyclization of trans,trans-farnesyl diphosphate (FPP) to the bicyclic sesquiterpene aristolochene. Following the formation of aristolochene, the non-oxygenated aristolochene is converted to the trioxygenated intermediate eremofortin B, via 7-epi-neopetasone. This conversion appears to involve three enzymes, a hydroxysterol oxidase-like enzyme, the quinone-oxidase prx3 that forms the quinone-type-structure in the bicyclic nucleus of aristolochene with the C8-oxo group and the C-3 hydroxyl group, and the P450 monooxygenase prx9 that introduces the epoxide at the double bond between carbons 1 and 2. No monoxy or dioxy-intermediates have been reported to be released to the broth, so these three early oxidative reactions may be coupled together. Eremofortin B is further oxidized by another P450 monooxygenase, that introduces a second epoxide between carbons 7 and 11 prior to acetylation to eremofortin A by the acetyltransferase prx11. The second epoxidation may be performed by a second P450 monooxygenase. After the acetylation step, eremofortin A is converted to eremofortin C and then to PR-toxin. First the conversion of eremofortin A to eremofortin C proceeds by oxidation of the side chain of the molecule at C-12 and is catalyzed by the short-chain oxidoreductase prx1. The cytochrome P450 monooxygenase prx8 also plays a role in this step. The primary alcohol formed at C-12 is finally oxidized by the short-chain alcohol dehydrogenase prx4 that forms PR-toxin. The protein is Short-chain dehydrogenase/reductase prx7 of Penicillium rubens (strain ATCC 28089 / DSM 1075 / NRRL 1951 / Wisconsin 54-1255) (Penicillium chrysogenum).